A 141-amino-acid polypeptide reads, in one-letter code: Hemoglobin subunit alpha-D (141 aa).

Residues 1–141 enclose the Globin domain; it reads MLSADDKKII…VAAVLAEKYR (141 aa). Residues His58 and His87 each contribute to the heme b site.

The protein belongs to the globin family. Heterotetramer of two alpha-D chains and two beta chains. Red blood cells.

In terms of biological role, involved in oxygen transport from the lung to the various peripheral tissues. This is Hemoglobin subunit alpha-D (HBAD) from Anser indicus (Bar-headed goose).